We begin with the raw amino-acid sequence, 175 residues long: NADH-quinone oxidoreductase subunit I 2 (175 aa).

4Fe-4S ferredoxin-type domains are found at residues His50–Ala82 and Lys98–Gly127. 8 residues coordinate [4Fe-4S] cluster: Cys62, Cys65, Cys68, Cys72, Cys107, Cys110, Cys113, and Cys117.

This sequence belongs to the complex I 23 kDa subunit family. As to quaternary structure, NDH-1 is composed of 14 different subunits. Subunits NuoA, H, J, K, L, M, N constitute the membrane sector of the complex. [4Fe-4S] cluster is required as a cofactor.

It localises to the cell inner membrane. It catalyses the reaction a quinone + NADH + 5 H(+)(in) = a quinol + NAD(+) + 4 H(+)(out). Functionally, NDH-1 shuttles electrons from NADH, via FMN and iron-sulfur (Fe-S) centers, to quinones in the respiratory chain. The immediate electron acceptor for the enzyme in this species is believed to be ubiquinone. Couples the redox reaction to proton translocation (for every two electrons transferred, four hydrogen ions are translocated across the cytoplasmic membrane), and thus conserves the redox energy in a proton gradient. This Koribacter versatilis (strain Ellin345) protein is NADH-quinone oxidoreductase subunit I 2.